The following is a 336-amino-acid chain: Transmembrane protease serine 12 (336 aa).

The N-terminal stretch at 1 to 18 (MASWALSAALLCLGGAFA) is a signal peptide. Residues 19–312 (YSELHSLSLR…HYLSQGNINR (294 aa)) are Extracellular-facing. The 241-residue stretch at 66–306 (IIGGSQADTG…FQEWMTHYLS (241 aa)) folds into the Peptidase S1 domain. Cys-95 and Cys-111 are oxidised to a cystine. Residues His-110 and Asp-159 each act as charge relay system in the active site. Disulfide bonds link Cys-194-Cys-262, Cys-225-Cys-241, and Cys-252-Cys-282. N-linked (GlcNAc...) asparagine glycosylation is found at Asn-207, Asn-237, and Asn-246. Ser-256 (charge relay system) is an active-site residue. Residues 313–333 (LFNMDIVLGQVLTALGSVILL) traverse the membrane as a helical segment. Residues 334-336 (GVT) are Cytoplasmic-facing.

Belongs to the peptidase S1 family. Exclusively expressed in the testis, from spermatocytes to elongated spermatids (at protein level).

Its subcellular location is the cell membrane. It is found in the cytoplasmic vesicle. It localises to the secretory vesicle. The protein localises to the acrosome. Functionally, required for male fertility. Plays a critical role in sperm capacitation and acrosome reactions during fertilization, and also plays a role in the regulation of proteins involved in spermatogenesis. Regulates protein pathways that promote chromosomal synapsis formation, double-strand break repair, formation of the inner mitochondrial membrane cristae and apoptosis in developing sperm. Required for normal sperm motility and binding to the zona pellucida, potentially via a role in ADAM3 protein maturation. This chain is Transmembrane protease serine 12, found in Mus musculus (Mouse).